The chain runs to 215 residues: ER lumen protein-retaining receptor 3 (215 aa).

Residues 1–4 (MNIF) are Lumenal-facing. The chain crosses the membrane as a helical span at residues 5–24 (RLSGDVCHLIAIIILFLKIW). The Cytoplasmic segment spans residues 25-32 (RSKSCAGI). The chain crosses the membrane as a helical span at residues 33-52 (SGKSQVLFALVFTTRYLDLF). Positions 47–48 (RY) are interaction with the K-D-E-L motif on target proteins. Over 53 to 58 (TSYISA) the chain is Lumenal. The chain crosses the membrane as a helical span at residues 59–79 (YNTVMKVVYLLLAYSTVGLIF). The Cytoplasmic segment spans residues 80 to 92 (FRFRNSYDSESDS). Residues 93 to 110 (FRVEFLLVPVAGLSFLEN) traverse the membrane as a helical segment. Residues 111–116 (YAFTPL) are Lumenal-facing. The helical transmembrane segment at 117-135 (EILWTFSIYLESVAILPQL) threads the bilayer. Residues 136-149 (FMITKTGEAESITA) lie on the Cytoplasmic side of the membrane. The chain crosses the membrane as a helical span at residues 150-168 (HYLLFLGLYRALYLANWLW). An interaction with the K-D-E-L motif on target proteins region spans residues 159–169 (RALYLANWLWR). Topologically, residues 169–178 (RFHTEGFYDQ) are lumenal. Residues 179–199 (IAVVSGVVQTIFYCDFFYLYF) traverse the membrane as a helical segment. Residues 200 to 215 (TRVLRGSGKMSLPMPV) lie on the Cytoplasmic side of the membrane. The important for recycling of cargo proteins with the sequence motif K-D-E-L from the Golgi to the endoplasmic reticulum stretch occupies residues 204–208 (RGSGK).

The protein belongs to the ERD2 family.

The protein localises to the endoplasmic reticulum membrane. Its subcellular location is the golgi apparatus membrane. It localises to the cytoplasmic vesicle. It is found in the COPI-coated vesicle membrane. Its function is as follows. Receptor for the C-terminal sequence motif K-D-E-L that is present on endoplasmic reticulum resident proteins and that mediates their recycling from the Golgi back to the endoplasmic reticulum. This chain is ER lumen protein-retaining receptor 3 (kdelr3), found in Danio rerio (Zebrafish).